A 383-amino-acid polypeptide reads, in one-letter code: Acetylornithine deacetylase (383 aa).

A Zn(2+)-binding site is contributed by histidine 80. Aspartate 82 is a catalytic residue. Aspartate 112 is a binding site for Zn(2+). The active site involves glutamate 144. Zn(2+) contacts are provided by glutamate 145, glutamate 169, and histidine 355.

It belongs to the peptidase M20A family. ArgE subfamily. In terms of assembly, homodimer. Requires Zn(2+) as cofactor. Co(2+) serves as cofactor. The cofactor is glutathione.

It localises to the cytoplasm. It carries out the reaction N(2)-acetyl-L-ornithine + H2O = L-ornithine + acetate. The protein operates within amino-acid biosynthesis; L-arginine biosynthesis; L-ornithine from N(2)-acetyl-L-ornithine (linear): step 1/1. Functionally, catalyzes the hydrolysis of the amide bond of N(2)-acetylated L-amino acids. Cleaves the acetyl group from N-acetyl-L-ornithine to form L-ornithine, an intermediate in L-arginine biosynthesis pathway, and a branchpoint in the synthesis of polyamines. This chain is Acetylornithine deacetylase, found in Shigella dysenteriae serotype 1 (strain Sd197).